Here is a 395-residue protein sequence, read N- to C-terminus: Putative 8-amino-7-oxononanoate synthase (395 aa).

R23 contacts substrate. 110 to 111 serves as a coordination point for pyridoxal 5'-phosphate; the sequence is GF. H135 serves as a coordination point for substrate. Pyridoxal 5'-phosphate contacts are provided by residues S182, 207-210, and 239-242; these read DEAH and TFSK. Position 242 is an N6-(pyridoxal phosphate)lysine (K242). T356 lines the substrate pocket.

This sequence belongs to the class-II pyridoxal-phosphate-dependent aminotransferase family. BioF subfamily. In terms of assembly, homodimer. It depends on pyridoxal 5'-phosphate as a cofactor.

The catalysed reaction is 6-carboxyhexanoyl-[ACP] + L-alanine + H(+) = (8S)-8-amino-7-oxononanoate + holo-[ACP] + CO2. Its pathway is cofactor biosynthesis; biotin biosynthesis. In terms of biological role, catalyzes the decarboxylative condensation of pimeloyl-[acyl-carrier protein] and L-alanine to produce 8-amino-7-oxononanoate (AON), [acyl-carrier protein], and carbon dioxide. This Bacillus anthracis protein is Putative 8-amino-7-oxononanoate synthase (bioF).